The following is a 309-amino-acid chain: Acetyl-coenzyme A carboxylase carboxyl transferase subunit beta (309 aa).

One can recognise a CoA carboxyltransferase N-terminal domain in the interval 27–296; it reads LWKKCPKCGA…PGTEAPIEFE (270 aa). Positions 31, 34, 50, and 53 each coordinate Zn(2+). A C4-type zinc finger spans residues 31 to 53; it reads CPKCGAFLYKPELEKNLDVCPKC. The disordered stretch occupies residues 288–309; that stretch reads GTEAPIEFEVTEKPDVDEPEGQ.

This sequence belongs to the AccD/PCCB family. Acetyl-CoA carboxylase is a heterohexamer composed of biotin carboxyl carrier protein (AccB), biotin carboxylase (AccC) and two subunits each of ACCase subunit alpha (AccA) and ACCase subunit beta (AccD). It depends on Zn(2+) as a cofactor.

Its subcellular location is the cytoplasm. It carries out the reaction N(6)-carboxybiotinyl-L-lysyl-[protein] + acetyl-CoA = N(6)-biotinyl-L-lysyl-[protein] + malonyl-CoA. It functions in the pathway lipid metabolism; malonyl-CoA biosynthesis; malonyl-CoA from acetyl-CoA: step 1/1. Its function is as follows. Component of the acetyl coenzyme A carboxylase (ACC) complex. Biotin carboxylase (BC) catalyzes the carboxylation of biotin on its carrier protein (BCCP) and then the CO(2) group is transferred by the transcarboxylase to acetyl-CoA to form malonyl-CoA. This Marinobacter nauticus (strain ATCC 700491 / DSM 11845 / VT8) (Marinobacter aquaeolei) protein is Acetyl-coenzyme A carboxylase carboxyl transferase subunit beta.